The primary structure comprises 316 residues: tRNA dimethylallyltransferase (316 aa).

ATP is bound at residue 12–19 (GPTASGKT). 14 to 19 (TASGKT) contributes to the substrate binding site. Interaction with substrate tRNA stretches follow at residues 37–40 (DSAL) and 161–165 (QRILR).

It belongs to the IPP transferase family. As to quaternary structure, monomer. Requires Mg(2+) as cofactor.

The enzyme catalyses adenosine(37) in tRNA + dimethylallyl diphosphate = N(6)-dimethylallyladenosine(37) in tRNA + diphosphate. Functionally, catalyzes the transfer of a dimethylallyl group onto the adenine at position 37 in tRNAs that read codons beginning with uridine, leading to the formation of N6-(dimethylallyl)adenosine (i(6)A). This Idiomarina loihiensis (strain ATCC BAA-735 / DSM 15497 / L2-TR) protein is tRNA dimethylallyltransferase.